The chain runs to 402 residues: Shaggy-related protein kinase GSK2 (402 aa).

The tract at residues 1 to 38 is disordered; the sequence is MDQPAPAPEPMLLDAQPPAAVACDKKQQEGEAPYAEGN. Residues 63–347 form the Protein kinase domain; the sequence is YMAERVVGTG…ALDACAHPFF (285 aa). ATP-binding positions include 69–77 and Lys-92; that span reads VGTGSFGIV. Asp-188 acts as the Proton acceptor in catalysis.

This sequence belongs to the protein kinase superfamily. CMGC Ser/Thr protein kinase family. GSK-3 subfamily. In terms of assembly, interacts with DLT. Interacts with OFP8. Interacts with GRF4. Interacts with PUB24. Interacts with SMOS1. Autophosphorylated. In terms of tissue distribution, expressed in lamina joints, vascular tissue and nodes.

Its subcellular location is the cytoplasm. It is found in the nucleus. It catalyses the reaction L-seryl-[protein] + ATP = O-phospho-L-seryl-[protein] + ADP + H(+). The enzyme catalyses L-threonyl-[protein] + ATP = O-phospho-L-threonyl-[protein] + ADP + H(+). Functionally, serine-threonine kinase that acts as a negative regulator of brassinosteroid (BR) signaling. Phosphorylates DLT and BZR1, two positive regulators that mediates several BR responses. Phosphorylation of DLT and BZR1 inhibits their activities in BR signaling. Phosphorylates OFP8, a positive regulator of BR responses. Phosphorylated OFP8 shuttles from the nucleus to the cytoplasm where it is degraded by the proteasome. Phosphorylates the E3 ubiquitin-protein ligase PUB24, a negative regulator of BR signaling, which targets BZR1 and promotes its degradation via the 26S proteasome. Phosphorylation of PUB24 increases its stability. Phosphorylates the AP2-ERF transcription factor SMOS1, a positive regulator of BR signaling, which cooperatively functions in a transactivating complex with BZR1 to enhance the transcription of BR biosynthetic genes. Phosphorylation of SMOS1 leads to its degradation by an unknown mechanism. The protein is Shaggy-related protein kinase GSK2 of Oryza sativa subsp. japonica (Rice).